The primary structure comprises 518 residues: Membrane-bound glycerophospholipid O-acyltransferase 2 (518 aa).

6 consecutive transmembrane segments (helical) span residues 21 to 41 (PVDQ…AIWF), 60 to 80 (TLLG…HFVI), 87 to 107 (YLMI…FALG), 183 to 203 (FMGI…FIEG), 230 to 250 (IAVA…MTIT), and 267 to 283 (ASWP…LMAA). Residues N341 and H372 contribute to the active site. 3 helical membrane passes run 365 to 385 (FILS…FLTG), 415 to 435 (IITW…FVLL), and 443 to 463 (FYSS…LVFP).

Belongs to the membrane-bound acyltransferase family.

The protein localises to the endoplasmic reticulum membrane. It carries out the reaction a 1-acyl-sn-glycero-3-phosphocholine + an acyl-CoA = a 1,2-diacyl-sn-glycero-3-phosphocholine + CoA. It catalyses the reaction a 1-acyl-sn-glycero-3-phosphoethanolamine + an acyl-CoA = a 1,2-diacyl-sn-glycero-3-phosphoethanolamine + CoA. The catalysed reaction is a 1-acyl-sn-glycero-3-phosphate + an acyl-CoA = a 1,2-diacyl-sn-glycero-3-phosphate + CoA. The enzyme catalyses (9Z)-hexadecenoyl-CoA + 1-hexadecanoyl-sn-glycero-3-phosphocholine = 1-hexadecanoyl-2-(9Z-hexadecenoyl)-sn-glycero-3-phosphocholine + CoA. It carries out the reaction 1-hexadecanoyl-sn-glycero-3-phosphoethanolamine + (9Z)-octadecenoyl-CoA = 1-hexadecanoyl-2-(9Z-octadecenoyl)-sn-glycero-3-phosphoethanolamine + CoA. It catalyses the reaction 1-hexadecanoyl-sn-glycero-3-phosphoethanolamine + (9Z)-hexadecenoyl-CoA = 1-hexadecanoyl-2-(9Z)-hexadecenoyl-sn-glycero-3-phosphoethanolamine + CoA. The catalysed reaction is 1-(9Z-octadecenoyl)-sn-glycero-3-phospho-L-serine + hexadecanoyl-CoA = 1-(9Z)-octadecenoyl-2-hexadecanoyl-sn-glycero-3-phosphoserine + CoA. The enzyme catalyses (9Z,12Z)-octadecadienoyl-CoA + 1-hexadecanoyl-sn-glycero-3-phosphocholine = 1-hexadecanoyl-2-(9Z,12Z-octadecadienoyl)-sn-glycero-3-phosphocholine + CoA. It carries out the reaction 1-hexadecanoyl-sn-glycero-3-phosphocholine + (9Z)-octadecenoyl-CoA = 1-hexadecanoyl-2-(9Z-octadecenoyl)-sn-glycero-3-phosphocholine + CoA. It catalyses the reaction 1-hexadecanoyl-sn-glycero-3-phosphate + (9Z)-hexadecenoyl-CoA = 1-hexadecanoyl-2-[(9Z)-hexadec-9-enoyl]-sn-glycero-3-phosphate + CoA. The catalysed reaction is 1-hexadecanoyl-sn-glycero-3-phosphate + (9Z)-octadecenoyl-CoA = 1-hexadecanoyl-2-(9Z-octadecenoyl)-sn-glycero-3-phosphate + CoA. The enzyme catalyses a 1-O-(1Z-alkenyl)-sn-glycero-3-phosphocholine + (9Z)-octadecenoyl-CoA = 1-O-(1Z)-alkenyl-2-(9Z)-octadecenoyl-sn-glycero-3-phosphocholine + CoA. It carries out the reaction a 1-O-(1Z-alkenyl)-sn-glycero-3-phosphoethanolamine + (9Z)-octadecenoyl-CoA = 1-O-(1Z)-alkenyl-2-(9Z)-octadecenoyl-sn-glycero-3-phosphoethanolamine + CoA. It catalyses the reaction 1-octadecanoyl-sn-glycero-3-phosphoethanolamine + (9Z)-octadecenoyl-CoA = 1-octadecanoyl-2-(9Z-octadecenoyl)-sn-glycero-3-phosphoethanolamine + CoA. The catalysed reaction is 1-octadecanoyl-sn-glycero-3-phosphocholine + (9Z)-octadecenoyl-CoA = 1-octadecanoyl-2-(9Z-octadecenoyl)-sn-glycero-3-phosphocholine + CoA. The enzyme catalyses 1-(9Z-octadecenoyl)-sn-glycero-3-phosphoethanolamine + (9Z)-octadecenoyl-CoA = 1,2-di-(9Z-octadecenoyl)-sn-glycero-3-phosphoethanolamine + CoA. Its pathway is lipid metabolism; phospholipid metabolism. Acyltransferase which catalyzes the transfer of an acyl group from an acyl-CoA to a lysophospholipid leading to the production of a phospholipid and participates in the reacylation step of the phospholipid remodeling pathway also known as the Lands cycle. May catalyze preferentially the acylation of lysophosphatidylethanolamine (1-acyl-sn-glycero-3-phosphoethanolamine or LPE) and lysophosphatidic acid (LPA) and to a lesser extend lysophosphatidylcholine (LPC) and lysophosphatidylserine (LPS). Prefers oleoyl-CoA as the acyl donor. The polypeptide is Membrane-bound glycerophospholipid O-acyltransferase 2 (Gallus gallus (Chicken)).